Reading from the N-terminus, the 414-residue chain is 2-epi-5-epi-valiolone synthase (414 aa).

Residues D70, 101-104 (ESAK), 134-138 (GVLTD), 158-159 (TT), K171, K180, and 198-201 (FLAT) contribute to the NAD(+) site. The active site involves K171. The Zn(2+) site is built by E213, H284, and H300.

The protein belongs to the sugar phosphate cyclases superfamily. EEVS family. Requires NAD(+) as cofactor. The cofactor is Zn(2+).

It carries out the reaction D-sedoheptulose 7-phosphate = 2-epi-5-epi-valiolone + phosphate. It participates in antibiotic biosynthesis. Functionally, catalyzes the cyclization of D-sedoheptulose 7-phosphate to 2-epi-5-epi-valiolone. Involved in validamycin biosynthesis. This chain is 2-epi-5-epi-valiolone synthase, found in Streptomyces hygroscopicus subsp. jinggangensis (strain 5008).